The sequence spans 141 residues: Phosphoribosyl-AMP cyclohydrolase (141 aa).

Position 88 (Asp-88) interacts with Mg(2+). A Zn(2+)-binding site is contributed by Cys-89. The Mg(2+) site is built by Asp-90 and Asp-92. Cys-109 and Cys-116 together coordinate Zn(2+).

Belongs to the PRA-CH family. As to quaternary structure, homodimer. The cofactor is Mg(2+). Zn(2+) is required as a cofactor.

The protein resides in the cytoplasm. The enzyme catalyses 1-(5-phospho-beta-D-ribosyl)-5'-AMP + H2O = 1-(5-phospho-beta-D-ribosyl)-5-[(5-phospho-beta-D-ribosylamino)methylideneamino]imidazole-4-carboxamide. Its pathway is amino-acid biosynthesis; L-histidine biosynthesis; L-histidine from 5-phospho-alpha-D-ribose 1-diphosphate: step 3/9. Its function is as follows. Catalyzes the hydrolysis of the adenine ring of phosphoribosyl-AMP. This chain is Phosphoribosyl-AMP cyclohydrolase, found in Paracidovorax citrulli (strain AAC00-1) (Acidovorax citrulli).